Here is a 177-residue protein sequence, read N- to C-terminus: Large ribosomal subunit protein uL6 (177 aa).

It belongs to the universal ribosomal protein uL6 family. As to quaternary structure, part of the 50S ribosomal subunit.

This protein binds to the 23S rRNA, and is important in its secondary structure. It is located near the subunit interface in the base of the L7/L12 stalk, and near the tRNA binding site of the peptidyltransferase center. This is Large ribosomal subunit protein uL6 from Bradyrhizobium sp. (strain ORS 278).